The primary structure comprises 669 residues: DNA ligase (669 aa).

NAD(+)-binding positions include D34–D38, S83–L84, and E117. The active-site N6-AMP-lysine intermediate is the K119. NAD(+)-binding residues include R140, E177, K293, and K317. Zn(2+) is bound by residues C411, C414, C429, and C434. A BRCT domain is found at R591–G669.

Belongs to the NAD-dependent DNA ligase family. LigA subfamily. Mg(2+) is required as a cofactor. The cofactor is Mn(2+).

The enzyme catalyses NAD(+) + (deoxyribonucleotide)n-3'-hydroxyl + 5'-phospho-(deoxyribonucleotide)m = (deoxyribonucleotide)n+m + AMP + beta-nicotinamide D-nucleotide.. DNA ligase that catalyzes the formation of phosphodiester linkages between 5'-phosphoryl and 3'-hydroxyl groups in double-stranded DNA using NAD as a coenzyme and as the energy source for the reaction. It is essential for DNA replication and repair of damaged DNA. The chain is DNA ligase from Geotalea daltonii (strain DSM 22248 / JCM 15807 / FRC-32) (Geobacter daltonii).